We begin with the raw amino-acid sequence, 184 residues long: ATP-dependent protease subunit HslV (184 aa).

Residue Thr12 is part of the active site. 3 residues coordinate Na(+): Ala166, Cys169, and Thr172.

This sequence belongs to the peptidase T1B family. HslV subfamily. In terms of assembly, a double ring-shaped homohexamer of HslV is capped on each side by a ring-shaped HslU homohexamer. The assembly of the HslU/HslV complex is dependent on binding of ATP.

The protein resides in the cytoplasm. The enzyme catalyses ATP-dependent cleavage of peptide bonds with broad specificity.. With respect to regulation, allosterically activated by HslU binding. Its function is as follows. Protease subunit of a proteasome-like degradation complex believed to be a general protein degrading machinery. This is ATP-dependent protease subunit HslV from Nitrobacter hamburgensis (strain DSM 10229 / NCIMB 13809 / X14).